Consider the following 331-residue polypeptide: D-alanine--D-alanine ligase (331 aa).

Positions 116-316 (KRQWQTHGLP…YEDFVLQLAA (201 aa)) constitute an ATP-grasp domain. 142–197 (ADRLGLPLIVKPAREGSSIGLTKVTSVAELPAAYEKAARLDRDVMAEQFIEGDELT) serves as a coordination point for ATP. 3 residues coordinate Mg(2+): aspartate 269, glutamate 283, and asparagine 285.

Belongs to the D-alanine--D-alanine ligase family. Mg(2+) serves as cofactor. Requires Mn(2+) as cofactor.

It localises to the cytoplasm. It carries out the reaction 2 D-alanine + ATP = D-alanyl-D-alanine + ADP + phosphate + H(+). The protein operates within cell wall biogenesis; peptidoglycan biosynthesis. Its function is as follows. Cell wall formation. The polypeptide is D-alanine--D-alanine ligase (Ralstonia pickettii (strain 12J)).